Reading from the N-terminus, the 513-residue chain is Varicidin biosynthesis cluster-specific transcription factor (513 aa).

A DNA-binding region (zn(2)-C6 fungal-type) is located at residues 16–54; it reads CERCRLHKLKCTILPQKRFEGPQEAPEQCTRCARAKAKC. Disordered regions lie at residues 58-92 and 97-116; these read RRAP…MQPN and VSSH…SSLK. Residues 67–76 are compositionally biased toward low complexity; it reads SSSNDRSSVS. Residues 77–92 are compositionally biased toward polar residues; sequence KGINSTTPATRTMQPN.

The protein resides in the nucleus. Its function is as follows. Transcription factor that regulates the expression of the gene cluster that mediates the biosynthesis of varicidin A, an antifungal natural product containing a cis-octahydrodecalin core. This chain is Varicidin biosynthesis cluster-specific transcription factor, found in Talaromyces variabilis (Penicillium variabile).